Consider the following 157-residue polypeptide: Thioredoxin 2 (157 aa).

A signal peptide spans Met-1–Cys-23. Residues Leu-46–Leu-157 form the Thioredoxin domain. Residues Cys-82 and Cys-85 each act as nucleophile in the active site. Cys-82 and Cys-85 are disulfide-bonded.

The protein belongs to the thioredoxin family. In terms of assembly, monomer. Component of the Plasmodium translocon of exported proteins (PTEX) complex composed of HSP101, EXP2, PTEX150, PTEX88 and TRX2. The disulfide bond between Cys-82 and Cys-85 acts as a redox-active center and is reduced by thioredoxin reductase TRXR.

The protein resides in the parasitophorous vacuole membrane. Its function is as follows. Participates in various redox reactions through the reversible oxidation of its active center dithiol to a disulfide and catalyzes dithiol-disulfide exchange reactions. As part of the translocon PTEX complex, plays a role in the export of parasite proteins into the host erythrocyte. The translocon PTEX complex is a multi-protein machinery resident in the parasite parasitophorous vacuolar membrane, responsible for protein secretion into host cells. May contribute to the unfolding of proteins containing the PEXEL localization motif before their passage through the translocon or regulate the PTEX complex function. This chain is Thioredoxin 2, found in Plasmodium falciparum (isolate 3D7).